Consider the following 2629-residue polypeptide: Telomerase protein component 1 (2629 aa).

TEP1 N-terminal repeat units lie at residues 1–30 (MEKL…DIQP), 31–60 (LEKI…DLQP), 61–90 (MEKI…DLQS), and 91–120 (LEKL…TVKR). The 459-residue stretch at 231–689 (LKLTSGDSDS…VKHNLPPLPG (459 aa)) folds into the TROVE domain. The span at 390 to 401 (PRKHRSKTRSRQ) shows a compositional bias: basic residues. Residues 390-416 (PRKHRSKTRSRQPPRPQRTKPPFSESG) are disordered. One can recognise an NACHT domain in the interval 1175 to 1582 (RLSLVIGQAG…KFLTNLHVVA (408 aa)). 1181-1188 (GQAGQGKT) serves as a coordination point for ATP. WD repeat units lie at residues 1424-1461 (VLPQ…TKSW), 1685-1724 (PISS…EEKA), 1727-1765 (SGCD…WVFQ), 1768-1807 (AHQY…LAFQ), 1809-1848 (THPK…VTKE), 1851-1890 (GPGP…RLAA), 1893-1934 (AQCG…GCLG), 1936-1975 (LYLS…QEAQ), 1978-2016 (ELNV…LQSL), 2019-2058 (SSVC…QPHA), 2070-2109 (GHEG…APLL), 2116-2154 (CHRD…QLGQ), 2157-2194 (GHQS…LTSI), 2200-2244 (PISQ…QIHT), 2247-2285 (GHSG…DDTC), 2288-2327 (RSSA…ATAR), 2329-2365 (PGRV…GSTC), 2378-2427 (EDLG…SSIL), 2470-2510 (PNGS…GEWV), 2555-2592 (IHLG…LLGL), and 2594-2628 (RCEG…FLSW).

Associated component of the telomerase holoenzyme complex. Component of the vault ribonucleoprotein particle, at least composed of MVP, PARP4 and one or more vault RNAs (vRNAs). Binds to VAULTRC1, VAULTRC2 and VAULTRC4/hvg4 vRNAs.

Its subcellular location is the nucleus. It is found in the chromosome. The protein resides in the telomere. Functionally, component of the telomerase ribonucleoprotein complex that is essential for the replication of chromosome termini. Also a component of the ribonucleoprotein vaults particle, a multi-subunit structure involved in nucleo-cytoplasmic transport. Responsible for the localizing and stabilizing vault RNA (vRNA) association in the vault ribonucleoprotein particle. Binds to TERC. The polypeptide is Telomerase protein component 1 (Tep1) (Rattus norvegicus (Rat)).